The chain runs to 52 residues: Light-harvesting protein B800/830/1020 alpha-1 chain (52 aa).

At 1–12 the chain is on the cytoplasmic side; that stretch reads MWRIWKVFDPRR. Residues 13–33 traverse the membrane as a helical segment; the sequence is ILIATAIWLIIIALTIHVILM. His29 serves as a coordination point for a bacteriochlorophyll. At 34–52 the chain is on the periplasmic side; that stretch reads TTERFNWLEGAPAAEYYSS.

Belongs to the antenna complex alpha subunit family. The core complex is formed by different alpha and beta chains, binding bacteriochlorophyll molecules, and arranged most probably in tetrameric structures disposed around the reaction center. The non-pigmented gamma chains may constitute additional components.

It is found in the cell inner membrane. Antenna complexes are light-harvesting systems, which transfer the excitation energy to the reaction centers. The chain is Light-harvesting protein B800/830/1020 alpha-1 chain from Halorhodospira halochloris (Ectothiorhodospira halochloris).